The primary structure comprises 92 residues: Small ribosomal subunit protein uS19 (92 aa).

Belongs to the universal ribosomal protein uS19 family.

Its function is as follows. Protein S19 forms a complex with S13 that binds strongly to the 16S ribosomal RNA. The polypeptide is Small ribosomal subunit protein uS19 (Francisella tularensis subsp. tularensis (strain FSC 198)).